A 153-amino-acid polypeptide reads, in one-letter code: Cornifin-B (153 aa).

Disordered stretches follow at residues 1-35 (MSSH…PCVS) and 49-85 (CHPK…HPKA). 14 repeat units span residues 27 to 34 (PPPPEPCV), 35 to 42 (SQVKTPCD), 43 to 50 (TKVPEPCH), 51 to 58 (PKAPEPCH), 59 to 66 (PKAPEPCH), 67 to 74 (PKAPEPCH), 75 to 82 (PKAPEPCH), 83 to 90 (PKAPEPCH), 91 to 98 (PKAPEPCH), 99 to 106 (PKAPEPCH), 107 to 114 (PKAPEPCH), 115 to 122 (PKVPEPCL), 123 to 130 (PKAPEPCQ), and 131 to 138 (PIVPEPCP). Residues 27–138 (PPPPEPCVSQ…CQPIVPEPCP (112 aa)) are 14 X 8 AA approximate tandem repeats.

This sequence belongs to the cornifin (SPRR) family. In terms of tissue distribution, expressed in fetal periderm, hair follicles and in the thickened epidermis of the lip and footpad. Also present in the epithelia of various tissues such as the penis, vagina, forestomach, tongue and esophagus.

It is found in the cytoplasm. Cross-linked envelope protein of keratinocytes. It is a keratinocyte protein that first appears in the cell cytosol, but ultimately becomes cross-linked to membrane proteins by transglutaminase. All that results in the formation of an insoluble envelope beneath the plasma membrane. In Mus musculus (Mouse), this protein is Cornifin-B (Sprr1b).